A 152-amino-acid polypeptide reads, in one-letter code: MAELKVSAIKEGTVIDHIPAGKGLKVIQILGLGELKNGGAVLLAMNVPSKKLGRKDIVKVEGKFLSEEEVNKIALVAPTATVNIIREYKVVEKFKVEIPDVIEGILKCGNPNCITHYEYVTPKFYVISKEPLKVRCHYCERTMEEEEILANL.

The Zn(2+) site is built by C108, C113, C136, and C139.

The protein belongs to the PyrI family. In terms of assembly, contains catalytic and regulatory chains. Requires Zn(2+) as cofactor.

In terms of biological role, involved in allosteric regulation of aspartate carbamoyltransferase. The chain is Aspartate carbamoyltransferase regulatory chain from Pyrococcus furiosus (strain ATCC 43587 / DSM 3638 / JCM 8422 / Vc1).